We begin with the raw amino-acid sequence, 377 residues long: Cobalt-precorrin-5B C(1)-methyltransferase (377 aa).

Residues 1–21 are disordered; the sequence is MNPVRQPYDLAAPAPNGMRRG.

It belongs to the CbiD family.

It catalyses the reaction Co-precorrin-5B + S-adenosyl-L-methionine = Co-precorrin-6A + S-adenosyl-L-homocysteine. It functions in the pathway cofactor biosynthesis; adenosylcobalamin biosynthesis; cob(II)yrinate a,c-diamide from sirohydrochlorin (anaerobic route): step 6/10. Its function is as follows. Catalyzes the methylation of C-1 in cobalt-precorrin-5B to form cobalt-precorrin-6A. This is Cobalt-precorrin-5B C(1)-methyltransferase from Chromobacterium violaceum (strain ATCC 12472 / DSM 30191 / JCM 1249 / CCUG 213 / NBRC 12614 / NCIMB 9131 / NCTC 9757 / MK).